Consider the following 624-residue polypeptide: Protein FAM234B (624 aa).

Residues 1–91 (MATVLSRALK…GFPSEPLGGL (91 aa)) form a disordered region. S16 is subject to Phosphoserine. T26 carries the post-translational modification Phosphothreonine. A phosphoserine mark is found at S30, S33, and S63. The chain crosses the membrane as a helical span at residues 107-127 (VFLLTLVISMVLVLLCAFLIP).

The protein belongs to the FAM234 family.

It is found in the membrane. Its subcellular location is the golgi outpost. It localises to the cytoplasm. The protein localises to the cytoskeleton. The protein resides in the microtubule organizing center. This Mus musculus (Mouse) protein is Protein FAM234B.